The primary structure comprises 1406 residues: Protein FAM135B (1406 aa).

2 disordered regions span residues 519–548 (WTGQTSDAGTYPVADVDTSRRSPGPEDGQA) and 770–820 (SVSA…GDSG). Ser-777 and Ser-778 each carry phosphoserine. The span at 804 to 816 (KSQGSPGSCSQLC) shows a compositional bias: polar residues.

It belongs to the FAM135 family.

This Homo sapiens (Human) protein is Protein FAM135B (FAM135B).